We begin with the raw amino-acid sequence, 395 residues long: 1-deoxy-D-xylulose 5-phosphate reductoisomerase (395 aa).

6 residues coordinate NADPH: Thr13, Gly14, Ser15, Ile16, Lys40, and Asn127. Residue Lys128 coordinates 1-deoxy-D-xylulose 5-phosphate. Residue Glu129 coordinates NADPH. Asp153 is a binding site for Mn(2+). Residues Ser154, Glu155, Ser184, and His207 each coordinate 1-deoxy-D-xylulose 5-phosphate. Glu155 contributes to the Mn(2+) binding site. Gly213 is an NADPH binding site. Residues Ser220, Asn225, Lys226, and Glu229 each contribute to the 1-deoxy-D-xylulose 5-phosphate site. Glu229 serves as a coordination point for Mn(2+).

Belongs to the DXR family. It depends on Mg(2+) as a cofactor. Mn(2+) serves as cofactor.

The enzyme catalyses 2-C-methyl-D-erythritol 4-phosphate + NADP(+) = 1-deoxy-D-xylulose 5-phosphate + NADPH + H(+). The protein operates within isoprenoid biosynthesis; isopentenyl diphosphate biosynthesis via DXP pathway; isopentenyl diphosphate from 1-deoxy-D-xylulose 5-phosphate: step 1/6. Functionally, catalyzes the NADPH-dependent rearrangement and reduction of 1-deoxy-D-xylulose-5-phosphate (DXP) to 2-C-methyl-D-erythritol 4-phosphate (MEP). The protein is 1-deoxy-D-xylulose 5-phosphate reductoisomerase of Nitrosospira multiformis (strain ATCC 25196 / NCIMB 11849 / C 71).